A 274-amino-acid chain; its full sequence is Protein A11 homolog (274 aa).

Residues 106-136 (DDNKRVHLLEQEIAELRKKKTKSKNLLDFTN) adopt a coiled-coil conformation.

This sequence belongs to the poxviridae A11 family. In terms of assembly, homomultimer. Interacts with A32. In terms of processing, phosphorylated by a F10-independent mechanism.

The protein localises to the host cytoplasm. Functionally, required for viral crescent formation early during virus morphogenesis. This is Protein A11 homolog from Fowlpox virus (strain NVSL) (FPV).